A 683-amino-acid polypeptide reads, in one-letter code: U4/U6 small nuclear ribonucleoprotein Prp3 (683 aa).

Residues 1-87 (MALSKRELDE…HSKSSSDRSR (87 aa)) enclose the PWI domain. Residues 73-107 (GRSSRHSKSSSDRSRKRDLKEVFGDDSEISKESSG) show a composition bias toward basic and acidic residues. The segment at 73–135 (GRSSRHSKSS…IPGPPSESPG (63 aa)) is disordered. Residue Lys139 forms a Glycyl lysine isopeptide (Lys-Gly) (interchain with G-Cter in SUMO2) linkage. Residues 153–183 (IEERKKQLSFISPPTPQPKTPSSSQPERLPI) form a disordered region. A Phosphoserine modification is found at Ser164. Thr167 carries the post-translational modification Phosphothreonine. Glycyl lysine isopeptide (Lys-Gly) (interchain with G-Cter in SUMO2) cross-links involve residues Lys244 and Lys252. The interval 416–550 (NLVEHPAQLN…VHISVYRVRN (135 aa)) is mediates interaction with SART3. Ser619 is subject to Phosphoserine.

In terms of assembly, component of the precatalytic spliceosome (spliceosome B complex). Component of the U4/U6-U5 tri-snRNP complex, a building block of the precatalytic spliceosome (spliceosome B complex). The U4/U6-U5 tri-snRNP complex is composed of the U4, U6 and U5 snRNAs and at least PRPF3, PRPF4, PRPF6, PRPF8, PRPF31, SNRNP200, TXNL4A, SNRNP40, SNRPB, SNRPD1, SNRPD2, SNRPD3, SNRPE, SNRPF, SNRPG, DDX23, CD2BP2, PPIH, SNU13, EFTUD2, SART1 and USP39, plus LSM2, LSM3, LSM4, LSM5, LSM6, LSM7 and LSM8. Interacts directly with PRPF4. Part of a heteromeric complex containing PPIH, PRPF3 and PRPF4 that is stable in the absence of RNA. Interacts with SART3; the interaction is direct and recruits the deubiquitinase USP4 to PRPF3. Interacts with PRPF19. Interacts ('Lys-63'-linked polyubiquitinated) with PRPF8 (via the MPN (JAB/Mov34) domain); may stabilize the U4/U6-U5 tri-snRNP complex. Interacts with ERCC6. Ubiquitinated. Undergoes 'Lys-63'-linked polyubiquitination by PRPF19 and deubiquitination by USP4. 'Lys-63'-linked ubiquitination increases the affinity for PRPF8 and may regulate the assembly of the U4/U6-U5 tri-snRNP complex.

It localises to the nucleus. The protein resides in the nucleus speckle. Its function is as follows. Plays a role in pre-mRNA splicing as component of the U4/U6-U5 tri-snRNP complex that is involved in spliceosome assembly, and as component of the precatalytic spliceosome (spliceosome B complex). In Bos taurus (Bovine), this protein is U4/U6 small nuclear ribonucleoprotein Prp3 (PRPF3).